The sequence spans 1227 residues: Methionine synthase (1227 aa).

The Hcy-binding domain maps to 2–325; the sequence is SSKVEQLRAQ…QHIAAMSRAV (324 aa). 3 residues coordinate Zn(2+): Cys-247, Cys-310, and Cys-311. In terms of domain architecture, Pterin-binding spans 356–617; that stretch reads FVNVGERTNV…LPAELRDAVE (262 aa). The B12-binding N-terminal domain occupies 650–744; that stretch reads QQAEWRSWEV…FIEASKEQGK (95 aa). Methylcob(III)alamin-binding positions include Glu-694, 756-760, His-759, Ser-804, Thr-808, and Ala-860; that span reads GDVHD. Residues 746 to 881 enclose the B12-binding domain; the sequence is NGKMVIATVK…SDTQRDDFVA (136 aa). In terms of domain architecture, AdoMet activation spans 897 to 1227; that stretch reads KKPRTPPVTL…LAPNLGYDAD (331 aa). Residues Asp-946, Arg-1134, and 1189–1190 each bind S-adenosyl-L-methionine; that span reads YY.

The protein belongs to the vitamin-B12 dependent methionine synthase family. It depends on methylcob(III)alamin as a cofactor. Zn(2+) serves as cofactor.

It catalyses the reaction (6S)-5-methyl-5,6,7,8-tetrahydrofolate + L-homocysteine = (6S)-5,6,7,8-tetrahydrofolate + L-methionine. The protein operates within amino-acid biosynthesis; L-methionine biosynthesis via de novo pathway; L-methionine from L-homocysteine (MetH route): step 1/1. Catalyzes the transfer of a methyl group from methyl-cobalamin to homocysteine, yielding enzyme-bound cob(I)alamin and methionine. Subsequently, remethylates the cofactor using methyltetrahydrofolate. This is Methionine synthase (metH) from Escherichia coli (strain K12).